A 538-amino-acid chain; its full sequence is CTP synthase (538 aa).

The tract at residues 1 to 267 is amidoligase domain; the sequence is MDRAKFIFVT…LTPIARRFNL (267 aa). Residue Ser-15 participates in CTP binding. Ser-15 provides a ligand contact to UTP. ATP contacts are provided by residues 16-21 and Asp-73; that span reads SLGKGI. Residues Asp-73 and Glu-141 each coordinate Mg(2+). Residues 148–150, 188–193, and Lys-224 each bind CTP; these read DME and KTKPTQ. UTP contacts are provided by residues 188-193 and Lys-224; that span reads KTKPTQ. Residues 292-538 form the Glutamine amidotransferase type-1 domain; sequence KIGFVGKYLS…DFIKSALSKS (247 aa). Gly-351 is a binding site for L-glutamine. Residue Cys-378 is the Nucleophile; for glutamine hydrolysis of the active site. L-glutamine-binding positions include 379 to 382, Glu-402, and Arg-469; that span reads LGMQ. Residues His-513 and Glu-515 contribute to the active site.

It belongs to the CTP synthase family. As to quaternary structure, homotetramer.

It catalyses the reaction UTP + L-glutamine + ATP + H2O = CTP + L-glutamate + ADP + phosphate + 2 H(+). It carries out the reaction L-glutamine + H2O = L-glutamate + NH4(+). The enzyme catalyses UTP + NH4(+) + ATP = CTP + ADP + phosphate + 2 H(+). Its pathway is pyrimidine metabolism; CTP biosynthesis via de novo pathway; CTP from UDP: step 2/2. Its activity is regulated as follows. Allosterically activated by GTP, when glutamine is the substrate; GTP has no effect on the reaction when ammonia is the substrate. The allosteric effector GTP functions by stabilizing the protein conformation that binds the tetrahedral intermediate(s) formed during glutamine hydrolysis. Inhibited by the product CTP, via allosteric rather than competitive inhibition. Catalyzes the ATP-dependent amination of UTP to CTP with either L-glutamine or ammonia as the source of nitrogen. Regulates intracellular CTP levels through interactions with the four ribonucleotide triphosphates. The polypeptide is CTP synthase (Helicobacter pylori (strain ATCC 700392 / 26695) (Campylobacter pylori)).